Consider the following 99-residue polypeptide: Large ribosomal subunit protein uL23 (99 aa).

The protein belongs to the universal ribosomal protein uL23 family. In terms of assembly, part of the 50S ribosomal subunit. Contacts protein L29, and trigger factor when it is bound to the ribosome.

Its function is as follows. One of the early assembly proteins it binds 23S rRNA. One of the proteins that surrounds the polypeptide exit tunnel on the outside of the ribosome. Forms the main docking site for trigger factor binding to the ribosome. The chain is Large ribosomal subunit protein uL23 from Lachnospira eligens (strain ATCC 27750 / DSM 3376 / VPI C15-48 / C15-B4) (Eubacterium eligens).